Here is a 75-residue protein sequence, read N- to C-terminus: Defensin-like protein (75 aa).

A signal peptide spans 1–24 (MEKKSIAGLCFLFLVLFVAQEVVV). Cystine bridges form between Cys-31-Cys-75, Cys-42-Cys-63, Cys-48-Cys-69, and Cys-52-Cys-71.

Belongs to the DEFL family.

The protein resides in the secreted. In terms of biological role, this protein is required for germination. In Vigna unguiculata (Cowpea), this protein is Defensin-like protein.